Reading from the N-terminus, the 194-residue chain is WASH complex subunit 3 (194 aa).

Residue M1 is modified to N-acetylmethionine. Positions 46-74 (TVCEEKLADLSLRIQQIETTLNILDAKLS) form a coiled coil. The segment covering 98–123 (THSEATSEQSQQNSLQDSGPQESEVT) has biased composition (polar residues). Disordered stretches follow at residues 98–125 (THSE…VTPE) and 158–194 (SEGL…SFSD).

The protein belongs to the CCDC53 family. In terms of assembly, component of the WASH core complex also described as WASH regulatory complex (SHRC) composed of WASHC1, WASHC2, WASHC3, WASHC4 and WASHC5. The WASH core complex associates via WASHC2 with the F-actin-capping protein dimer (formed by CAPZA1, CAPZA2 or CAPZA3 and CAPZB) in a transient or substoichiometric manner which was initially described as WASH complex.

Its subcellular location is the early endosome. In terms of biological role, acts as a component of the WASH core complex that functions as a nucleation-promoting factor (NPF) at the surface of endosomes, where it recruits and activates the Arp2/3 complex to induce actin polymerization, playing a key role in the fission of tubules that serve as transport intermediates during endosome sorting. This Bos taurus (Bovine) protein is WASH complex subunit 3.